The primary structure comprises 458 residues: Paired box protein Pax-8 (458 aa).

A DNA-binding region (paired) is located at residues 18–144 (GHGGLNQLGG…SSINRIIRTK (127 aa)). The PAI subdomain stretch occupies residues 21 to 77 (GLNQLGGAFVNGRPLPEVVRQRIVDLAHQGVRPCDISRQLRVSHGCVSKILGRYYET). Positions 96–144 (KVVEKIGDYKRQNPTMFAWEIRDRLLAEGVCDNDTVPSVSSINRIIRTK) are RED subdomain. The interval 198–217 (PGADGKRKLDDSDQESCRLS) is disordered.

It is found in the nucleus. Functionally, probable transcription factor. Involved in kidney development, acting synergistically with lhx1/lim-1 to establish the pronephric primordium in late gastrulae/early neurulae. This Xenopus tropicalis (Western clawed frog) protein is Paired box protein Pax-8.